Consider the following 428-residue polypeptide: Endoplasmic reticulum junction formation protein lunapark (428 aa).

G2 carries N-myristoyl glycine lipidation. Topologically, residues G2 to R45 are cytoplasmic. Residues E16 to L41 are a coiled coil. A helical membrane pass occupies residues L46–L66. Over P67–T77 the chain is Lumenal. A helical membrane pass occupies residues L78–F98. The Cytoplasmic segment spans residues S99–E428. Residues T102–T128 adopt a coiled-coil conformation. 5 positions are modified to phosphoserine: S114, S153, S177, S182, and S194. The tract at residues S143–P247 is disordered. Over residues Q185–P198 the composition is skewed to pro residues. Phosphothreonine is present on residues T211 and T213. S217 and S227 each carry phosphoserine. Residues C276 to C301 form a C4-type; plays a role in ER morphology zinc finger. Residues S321, S353, and S384 each carry the phosphoserine modification. Residues H356–E428 form a disordered region. The span at S386–S401 shows a compositional bias: acidic residues. At S414 the chain carries Phosphoserine.

Belongs to the lunapark family. In terms of assembly, homodimer; homodimerization requires the C4-type zinc finger motif and decreases during mitosis in a phosphorylation-dependent manner. Myristoylated; myristoylation is necessary for the endoplasmic reticulum (ER) three-way ER tubular junction formation, but is not required neither for membrane translocation, membrane topology formation, nor for the specific localization to ER membranes. Post-translationally, phosphorylated. Phosphorylation occurs at Ser-177, Ser-182, Ser-217, Ser-227, Ser-321 and Ser-384 during interphase. Phosphorylation occurs at Ser-114, Ser-153, Ser-194, Thr-211 and Ser-353 during mitosis; these phosphorylations reduce both its homodimerization and the ER three-way tubular junction formation. In terms of processing, subject to proteasomal degradation following phosphorylation during mitosis. As to expression, expressed in neural precursor cells, where it is detected at the growth-cone-like structure and branching sites of neurite-like processes.

It localises to the endoplasmic reticulum membrane. Endoplasmic reticulum (ER)-shaping membrane protein that plays a role in determining ER morphology. Involved in the stabilization of nascent three-way ER tubular junctions within the ER network. May also play a role as a curvature-stabilizing protein within the three-way ER tubular junction network. May be involved in limb development. Is involved in central nervous system development. In Homo sapiens (Human), this protein is Endoplasmic reticulum junction formation protein lunapark.